The primary structure comprises 952 residues: Protocadherin-20 (952 aa).

The N-terminal stretch at 1 to 60 (MRGRGNARSLLVQAVSLRPATWHPCLDMGHLHRPSSRTSHRNLPHVFLLFLFVGPFNCLA) is a signal peptide. Residues 61–891 (SYSRATELLY…VESMSCMPTL (831 aa)) are Extracellular-facing. 6 Cadherin domains span residues 64–210 (RATE…APQF), 211–321 (PISE…CPLF), 322–536 (IDSQ…APVF), 537–640 (LQPL…SPRF), 641–743 (INKD…PPLV), and 747–864 (QSNM…EPEI). N-linked (GlcNAc...) asparagine glycosylation is present at asparagine 135. N-linked (GlcNAc...) asparagine glycosylation is found at asparagine 327 and asparagine 333. N-linked (GlcNAc...) asparagine glycans are attached at residues asparagine 681, asparagine 749, asparagine 804, asparagine 845, and asparagine 850. Residues 892–912 (VALSVISLGSITLVTGMGIYI) traverse the membrane as a helical segment. At 913–952 (CLRKGKKHHREDDNLEVQIPLKGKIDLCMRERKPVDISNI) the chain is on the cytoplasmic side.

It localises to the cell membrane. In terms of biological role, potential calcium-dependent cell-adhesion protein. This is Protocadherin-20 (Pcdh20) from Mus musculus (Mouse).